The sequence spans 99 residues: Plastocyanin (99 aa).

The Plastocyanin-like domain occupies 1–99; it reads IEVLLGGDDG…AGMVGKVTVN (99 aa). The Cu cation site is built by His-37, Cys-84, His-87, and Met-92.

It belongs to the plastocyanin family. Cu(2+) serves as cofactor.

It localises to the plastid. It is found in the chloroplast thylakoid membrane. Functionally, participates in electron transfer between P700 and the cytochrome b6-f complex in photosystem I. The chain is Plastocyanin (PETE) from Cucurbita pepo (Vegetable marrow).